A 359-amino-acid polypeptide reads, in one-letter code: MGSINQSLTQTEDEAFVFAMQLASASVLPMVLKATVELDLLEIMAKSGPGAFISPSELAAQLPTKNPEAPVMLDRMFRLLATYSVLNCTLRTLPDGRVERLYSLAPVCKFLTKNGDGVSIAPILLMNQDKVLMESWYHLTDAVLDGGVPFNKAYGMTTFEYHGTDPRFNKVFNCGMSDHTTLSMKKILEDYTGFEGLNSIVDVGGGTGATVNMIVSKYPSIKGINFDLPHVIRDAPSYPGVEQVGGDMFVSVPKADAIFMKWICHDWSDDHCIKLLKNCYEALPANGKVIIVECILPEAPDTSAATKSKVHGDIIMLAHNPGGKERTEKDFEALANWGWFSRFRKVCCAYHTWVMEFNK.

126-132 contacts substrate; it reads MNQDKVL. The interval 158–176 is substrate binding; that stretch reads TFEYHGTDPRFNKVFNCGM. The S-adenosyl-L-methionine site is built by Gly-204, Asp-227, Asp-247, Met-248, and Lys-261. His-265 acts as the Proton acceptor in catalysis.

The protein belongs to the class I-like SAM-binding methyltransferase superfamily. Cation-independent O-methyltransferase family. COMT subfamily. Homodimer.

It carries out the reaction (E)-caffeate + S-adenosyl-L-methionine = (E)-ferulate + S-adenosyl-L-homocysteine + H(+). It participates in aromatic compound metabolism; phenylpropanoid biosynthesis. In terms of biological role, catalyzes the conversion of caffeic acid to ferulic acid and of 5-hydroxyferulic acid to sinapic acid. The resulting products may subsequently be converted to the corresponding alcohols that are incorporated into lignins. The protein is Caffeic acid 3-O-methyltransferase (COMT) of Capsicum chinense (Scotch bonnet).